Reading from the N-terminus, the 540-residue chain is Sensory neuron membrane protein 1 (540 aa).

At 1 to 105 (MRTDDPVIGN…WIFRPDLSKP (105 aa)) the chain is on the cytoplasmic side. The helical transmembrane segment at 106-126 (LTGDEMITIPHPLILGALLMV) threads the bilayer. Residues 127-436 (QRDREAMMPL…YTLFLGLRFN (310 aa)) are Extracellular-facing. 2 N-linked (GlcNAc...) asparagine glycosylation sites follow: Asn193 and Asn206. 3 cysteine pairs are disulfide-bonded: Cys245–Cys310, Cys274–Cys330, and Cys312–Cys319. An N-linked (GlcNAc...) asparagine glycan is attached at Asn418. A helical membrane pass occupies residues 437–457 (TAVKWLTIIIGTIGTIVGGFM). The Cytoplasmic portion of the chain corresponds to 458-540 (HYKRTTKMVN…VTVTEMQERY (83 aa)).

This sequence belongs to the CD36 family.

It localises to the cell membrane. In terms of biological role, plays an olfactory role that is not restricted to pheromone sensitivity. The sequence is that of Sensory neuron membrane protein 1 from Aedes aegypti (Yellowfever mosquito).